Consider the following 381-residue polypeptide: DNA double-strand break repair protein Mre11 (381 aa).

Mn(2+) contacts are provided by Asp-9, His-11, Asp-50, and Asp-85. His-86 functions as the Proton donor in the catalytic mechanism. Residues His-156, His-187, and His-189 each coordinate Mn(2+).

Belongs to the MRE11/RAD32 family. Homodimer. Forms a heterotetramer composed of two Mre11 subunits and two Rad50 subunits. Mn(2+) serves as cofactor.

With respect to regulation, nuclease activity is regulated by Rad50. In terms of biological role, part of the Rad50/Mre11 complex, which is involved in the early steps of DNA double-strand break (DSB) repair. The complex may facilitate opening of the processed DNA ends to aid in the recruitment of HerA and NurA. Mre11 binds to DSB ends and has both double-stranded 3'-5' exonuclease activity and single-stranded endonuclease activity. In Saccharolobus solfataricus (strain ATCC 35092 / DSM 1617 / JCM 11322 / P2) (Sulfolobus solfataricus), this protein is DNA double-strand break repair protein Mre11.